Reading from the N-terminus, the 94-residue chain is MKFSNISIAALFTILASTAMAAPAADSPDSIVAREPAPVEETYEAPSGLEKRGFGCPGSEKKCHNHCKSVKGYKGGYCDGPYIPFVGRPRCKCY.

Residues M1 to A25 form the signal peptide. Positions D26–C56 are excised as a propeptide. 3 residues coordinate beta-D-GlcNAc-(1-&gt;4)-Mur2Ac(oyl-L-Ala-gamma-D-Glu-L-Lys-D-Ala-D-Ala)-di-trans,octa-cis-undecaprenyl diphosphate: F54, G55, and C56. Cystine bridges form between C56/C78, C63/C91, and C67/C93. Positions P57–E60 are interaction site with membrane interface. H66 provides a ligand contact to beta-D-GlcNAc-(1-&gt;4)-Mur2Ac(oyl-L-Ala-gamma-D-Glu-L-Lys-D-Ala-D-Ala)-di-trans,octa-cis-undecaprenyl diphosphate. Positions I83–R90 are interaction site with membrane interface. C91 is a binding site for beta-D-GlcNAc-(1-&gt;4)-Mur2Ac(oyl-L-Ala-gamma-D-Glu-L-Lys-D-Ala-D-Ala)-di-trans,octa-cis-undecaprenyl diphosphate.

This sequence belongs to the invertebrate defensin family.

Its subcellular location is the secreted. The protein localises to the target cell membrane. In terms of biological role, antibacterial peptide potently active against Gram-positive bacteria. May act by selectively inhibiting peptidoglycan biosynthesis through complex formation with the cell wall precursor lipid II (1:1 molar ratio) thus inhibiting cell wall synthesis. Shows remarkably activity against resistant isolates such as methicillin-resistant Staphylococcus aureus (MRSA) and vancomycin-resistant Enterococci (VRE) at the concentration of micromolar level. Does not act by destroying the membrane integrity, which is consistent with its nonamphiphilic architecture. Acts more rapidly than vancomycin. Shows low hemolysis and cytotoxicity and high serum stability. In vivo, is as efficient as vancomycin to protect mouse peritonitis models from MRSA infections. This Pseudallescheria apiosperma (Scedosporium apiospermum) protein is Fungal defensin scedosporisin-2.